A 207-amino-acid polypeptide reads, in one-letter code: Small ribosomal subunit protein uS5 (207 aa).

Residues 1–51 form a disordered region; sequence MTDTPTKQEITSKNDKVPGAIPGEQKKNNRNNDRKRNRRGDSKNLERDSDW. Residues 24 to 51 show a composition bias toward basic and acidic residues; the sequence is EQKKNNRNNDRKRNRRGDSKNLERDSDW. Positions 51–114 constitute an S5 DRBM domain; it reads WQERVVQIRR…SDGKKNLVRV (64 aa).

It belongs to the universal ribosomal protein uS5 family. In terms of assembly, part of the 30S ribosomal subunit. Contacts proteins S4 and S8.

With S4 and S12 plays an important role in translational accuracy. Its function is as follows. Located at the back of the 30S subunit body where it stabilizes the conformation of the head with respect to the body. This chain is Small ribosomal subunit protein uS5, found in Prochlorococcus marinus (strain MIT 9312).